Reading from the N-terminus, the 161-residue chain is Cell division protein SepF 2 (161 aa).

The tract at residues 19–47 (EDSEKAPELSSSRETKTKNQNQSKSLLRS) is disordered. A compositionally biased stretch (basic and acidic residues) spans 21–35 (SEKAPELSSSRETKT).

This sequence belongs to the SepF family. In terms of assembly, homodimer. Interacts with FtsZ.

The protein localises to the cytoplasm. Functionally, cell division protein that is part of the divisome complex and is recruited early to the Z-ring. Probably stimulates Z-ring formation, perhaps through the cross-linking of FtsZ protofilaments. Its function overlaps with FtsA. The protein is Cell division protein SepF 2 of Desulforamulus reducens (strain ATCC BAA-1160 / DSM 100696 / MI-1) (Desulfotomaculum reducens).